Reading from the N-terminus, the 504-residue chain is L-amino-acid oxidase (504 aa).

Residues 1 to 18 form the signal peptide; it reads MNVFFMFSLLFLAALGSC. C28 and C191 form a disulfide bridge. Residues 61 to 62, 81 to 82, R89, and 105 to 108 contribute to the FAD site; these read MS, EA, and GPMR. Position 108 (R108) interacts with substrate. N190 carries N-linked (GlcNAc...) asparagine glycosylation. Position 241 (H241) interacts with substrate. V279 serves as a coordination point for FAD. A disulfide bridge connects residues C349 and C430. N379 is a glycosylation site (N-linked (GlcNAc...) asparagine). Position 390 (Y390) interacts with substrate. Residues E475 and 482-487 each bind FAD; that span reads GWIDST. 482–483 is a substrate binding site; it reads GW.

This sequence belongs to the flavin monoamine oxidase family. FIG1 subfamily. As to quaternary structure, homodimer; non-covalently linked. Requires FAD as cofactor. As to expression, expressed by the venom gland.

It is found in the secreted. It carries out the reaction an L-alpha-amino acid + O2 + H2O = a 2-oxocarboxylate + H2O2 + NH4(+). The enzyme catalyses L-leucine + O2 + H2O = 4-methyl-2-oxopentanoate + H2O2 + NH4(+). Its function is as follows. Catalyzes an oxidative deamination of predominantly hydrophobic and aromatic L-amino acids, thus producing hydrogen peroxide that may contribute to the diverse toxic effects of this enzyme. Shows activity on L-Leu. Exhibits diverse biological activities, such as hemorrhage, hemolysis, edema, antibacterial and antiparasitic activities, as well as regulation of platelet aggregation. Its effect on platelets is controversial, since it either induces aggregation or inhibits agonist-induced aggregation. These different effects are probably due to different experimental conditions. This protein induces apoptosis of cultured HeLa cells. This is L-amino-acid oxidase from Gloydius halys (Chinese water mocassin).